The primary structure comprises 525 residues: Ribosomal protein S6 kinase beta-1 (525 aa).

The tract at residues M1 to M54 is disordered. Residues F28–L32 carry the TOS motif motif. Residues I30–E46 show a composition bias toward acidic residues. The Protein kinase domain maps to F91–F352. ATP contacts are provided by residues L97–V105 and K123. The Proton acceptor role is filled by D218. Position 252 is a phosphothreonine; by PDPK1 (T252). The 71-residue stretch at R353–K423 folds into the AGC-kinase C-terminal domain. The segment at S380–T399 is disordered. Positions Q381–T399 are enriched in polar residues. S394 is subject to Phosphoserine. Position 412 is a phosphothreonine; by MTOR, NEK6 and NEK7 (T412). Residues E424–L525 are autoinhibitory domain. 2 positions are modified to phosphoserine: S434 and S441. Residue T444 is modified to Phosphothreonine. 2 positions are modified to phosphoserine: S447 and S452. The residue at position 516 (K516) is an N6-acetyllysine.

The protein belongs to the protein kinase superfamily. AGC Ser/Thr protein kinase family. S6 kinase subfamily. In terms of assembly, interacts with PPP1R9A/neurabin-1. Interacts with RPTOR. Interacts with IRS1. Interacts with EIF3B and EIF3C. Interacts with TRAF4. Interacts with POLDIP3. Interacts (via N-terminus) with IER5. As to quaternary structure, (Microbial infection) Interacts with Mumps virus phosphoprotein; this interaction may play a role in the viral replication and transcription. Post-translationally, phosphorylation at Thr-412 is regulated by mTORC1. The phosphorylation at this site is maintained by an agonist-dependent autophosphorylation mechanism. Activated by phosphorylation at Thr-252 by PDPK1. Dephosphorylation by PPP1CC at Thr-412 in mitochondrion. Widely expressed.

Its subcellular location is the synapse. The protein localises to the synaptosome. It localises to the mitochondrion outer membrane. The protein resides in the mitochondrion. It is found in the nucleus. Its subcellular location is the cytoplasm. The catalysed reaction is L-seryl-[protein] + ATP = O-phospho-L-seryl-[protein] + ADP + H(+). It catalyses the reaction L-threonyl-[protein] + ATP = O-phospho-L-threonyl-[protein] + ADP + H(+). Activation requires multiple phosphorylation events on serine/threonine residues. Activation appears to be first mediated by phosphorylation of multiple sites in the autoinhibitory domain, which facilitates phosphorylation at Thr-412, disrupting the autoinhibitory mechanism and allowing phosphorylation of Thr-252 by PDPK1. The active conformation of the kinase is believed to be stabilized by a mechanism involving three conserved phosphorylation sites located in the kinase domain activation loop (Thr-252) and in the AGC-kinase C-terminal domain (Ser-394 in the middle of the tail/linker region and Thr-412 within a hydrophobic motif at its end). Activated by mTORC1; isoform Alpha I and isoform Alpha II are sensitive to rapamycin, which inhibits activating phosphorylation at Thr-412. Activated by PDPK1. Functionally, serine/threonine-protein kinase that acts downstream of mTOR signaling in response to growth factors and nutrients to promote cell proliferation, cell growth and cell cycle progression. Regulates protein synthesis through phosphorylation of EIF4B, RPS6 and EEF2K, and contributes to cell survival by repressing the pro-apoptotic function of BAD. Under conditions of nutrient depletion, the inactive form associates with the EIF3 translation initiation complex. Upon mitogenic stimulation, phosphorylation by the mechanistic target of rapamycin complex 1 (mTORC1) leads to dissociation from the EIF3 complex and activation. The active form then phosphorylates and activates several substrates in the pre-initiation complex, including the EIF2B complex and the cap-binding complex component EIF4B. Also controls translation initiation by phosphorylating a negative regulator of EIF4A, PDCD4, targeting it for ubiquitination and subsequent proteolysis. Promotes initiation of the pioneer round of protein synthesis by phosphorylating POLDIP3/SKAR. In response to IGF1, activates translation elongation by phosphorylating EEF2 kinase (EEF2K), which leads to its inhibition and thus activation of EEF2. Also plays a role in feedback regulation of mTORC2 by mTORC1 by phosphorylating MAPKAP1/SIN1, MTOR and RICTOR, resulting in the inhibition of mTORC2 and AKT1 signaling. Also involved in feedback regulation of mTORC1 and mTORC2 by phosphorylating DEPTOR. Mediates cell survival by phosphorylating the pro-apoptotic protein BAD and suppressing its pro-apoptotic function. Phosphorylates mitochondrial URI1 leading to dissociation of a URI1-PPP1CC complex. The free mitochondrial PPP1CC can then dephosphorylate RPS6KB1 at Thr-412, which is proposed to be a negative feedback mechanism for the RPS6KB1 anti-apoptotic function. Mediates TNF-alpha-induced insulin resistance by phosphorylating IRS1 at multiple serine residues, resulting in accelerated degradation of IRS1. In cells lacking functional TSC1-2 complex, constitutively phosphorylates and inhibits GSK3B. May be involved in cytoskeletal rearrangement through binding to neurabin. Phosphorylates and activates the pyrimidine biosynthesis enzyme CAD, downstream of MTOR. Following activation by mTORC1, phosphorylates EPRS and thereby plays a key role in fatty acid uptake by adipocytes and also most probably in interferon-gamma-induced translation inhibition. The polypeptide is Ribosomal protein S6 kinase beta-1 (RPS6KB1) (Homo sapiens (Human)).